The chain runs to 1225 residues: ABC transporter B family member 18 (1225 aa).

Transmembrane regions (helical) follow at residues 23–43, 70–90, 146–168, 172–194, 252–272, and 284–304; these read MALG…IFFI, VALV…GYCW, LPNF…LLLW, IVGF…ALIR, GIAI…TWYG, and GTVS…GQSL. The region spanning 23-312 is the ABC transmembrane type-1 1 domain; the sequence is MALGLIGAVG…SLSNLKYFSE (290 aa). The ABC transporter 1 domain occupies 347–583; it reads VEFNHVKFTY…LDGQYTSLVR (237 aa). 382 to 389 is a binding site for ATP; sequence GGSGSGKS. N-linked (GlcNAc...) asparagine glycosylation is present at Asn530. The next 2 helical transmembrane spans lie at 657–677 and 699–719; these read ALYG…YSYS and IYVL…ISQH. The ABC transmembrane type-1 2 domain occupies 657-945; that stretch reads ALYGCLGAAL…AGTMTKDLVK (289 aa). Asn754 carries an N-linked (GlcNAc...) asparagine glycan. Helical transmembrane passes span 780-800, 804-824, 880-900, and 919-939; these read LLVQ…VISW, IVMM…RVLL, SWLA…VSAL, and FLEI…AGTM. Residues Asn960 and Asn1000 are each glycosylated (N-linked (GlcNAc...) asparagine). The ABC transporter 2 domain occupies 980 to 1218; the sequence is ISFSNVDFAY…GPKGAYFSLV (239 aa). 1015–1022 provides a ligand contact to ATP; it reads GPSGSGKS. Residue Asn1201 is glycosylated (N-linked (GlcNAc...) asparagine).

Belongs to the ABC transporter superfamily. ABCB family. Multidrug resistance exporter (TC 3.A.1.201) subfamily.

The protein resides in the membrane. This Arabidopsis thaliana (Mouse-ear cress) protein is ABC transporter B family member 18 (ABCB18).